Consider the following 556-residue polypeptide: Urocanate hydratase (556 aa).

Residues 52 to 53 (GG), Gln130, 176 to 178 (GMG), Glu196, Arg201, 242 to 243 (NA), 263 to 267 (QTSAH), 273 to 274 (YL), and Tyr322 contribute to the NAD(+) site. Residue Cys410 is part of the active site. Gly492 provides a ligand contact to NAD(+).

It belongs to the urocanase family. The cofactor is NAD(+).

The protein resides in the cytoplasm. The catalysed reaction is 4-imidazolone-5-propanoate = trans-urocanate + H2O. The protein operates within amino-acid degradation; L-histidine degradation into L-glutamate; N-formimidoyl-L-glutamate from L-histidine: step 2/3. In terms of biological role, catalyzes the conversion of urocanate to 4-imidazolone-5-propionate. This is Urocanate hydratase from Shewanella sp. (strain MR-7).